A 346-amino-acid polypeptide reads, in one-letter code: Histidinol-phosphate aminotransferase (346 aa).

The residue at position 206 (Lys-206) is an N6-(pyridoxal phosphate)lysine.

It belongs to the class-II pyridoxal-phosphate-dependent aminotransferase family. Histidinol-phosphate aminotransferase subfamily. In terms of assembly, homodimer. It depends on pyridoxal 5'-phosphate as a cofactor.

The enzyme catalyses L-histidinol phosphate + 2-oxoglutarate = 3-(imidazol-4-yl)-2-oxopropyl phosphate + L-glutamate. It participates in amino-acid biosynthesis; L-histidine biosynthesis; L-histidine from 5-phospho-alpha-D-ribose 1-diphosphate: step 7/9. This is Histidinol-phosphate aminotransferase from Bacteroides thetaiotaomicron (strain ATCC 29148 / DSM 2079 / JCM 5827 / CCUG 10774 / NCTC 10582 / VPI-5482 / E50).